The chain runs to 474 residues: UDP-N-acetylmuramate--L-alanine ligase (474 aa).

ATP is bound at residue 115-121; sequence GTHGKTT.

Belongs to the MurCDEF family.

Its subcellular location is the cytoplasm. It carries out the reaction UDP-N-acetyl-alpha-D-muramate + L-alanine + ATP = UDP-N-acetyl-alpha-D-muramoyl-L-alanine + ADP + phosphate + H(+). Its pathway is cell wall biogenesis; peptidoglycan biosynthesis. Cell wall formation. In Novosphingobium aromaticivorans (strain ATCC 700278 / DSM 12444 / CCUG 56034 / CIP 105152 / NBRC 16084 / F199), this protein is UDP-N-acetylmuramate--L-alanine ligase.